Reading from the N-terminus, the 757-residue chain is Polyribonucleotide nucleotidyltransferase (757 aa).

Positions 487 and 493 each coordinate Mg(2+). The KH domain occupies 554–613 (PRITTVRVKPDQIRLIIGPGGKTIKGIVDQTGVAIDVEDDGTVNVASADSDAVKRALDII). The S1 motif domain occupies 623–691 (GATYKGTVKR…REGKIRLSRR (69 aa)). A disordered region spans residues 697 to 757 (PEGEEGDRAR…PPRERRERRS (61 aa)). Composition is skewed to basic and acidic residues over residues 702–711 (GDRARERMAQ) and 719–757 (PRRDGPGGRGGDRGGDRGSRPGLDRDRGGPPRERRERRS).

The protein belongs to the polyribonucleotide nucleotidyltransferase family. The cofactor is Mg(2+).

The protein localises to the cytoplasm. The catalysed reaction is RNA(n+1) + phosphate = RNA(n) + a ribonucleoside 5'-diphosphate. In terms of biological role, involved in mRNA degradation. Catalyzes the phosphorolysis of single-stranded polyribonucleotides processively in the 3'- to 5'-direction. The chain is Polyribonucleotide nucleotidyltransferase from Sorangium cellulosum (strain So ce56) (Polyangium cellulosum (strain So ce56)).